A 309-amino-acid chain; its full sequence is Probable ABC transporter permease protein YesP (309 aa).

6 helical membrane passes run 29–49 (FIIG…FLSF), 84–104 (FTYV…IAVI), 114–134 (IYRT…VAIM), 167–187 (ALWT…LIFL), 217–237 (LPIL…SAFM), and 275–295 (YASA…LILF). Residues 80 to 294 (LKVTFTYVLA…VIVGLITLIL (215 aa)) form the ABC transmembrane type-1 domain.

The protein belongs to the binding-protein-dependent transport system permease family. MalFG subfamily.

Its subcellular location is the cell membrane. In terms of biological role, part of a binding-protein-dependent transport system. Probably responsible for the translocation of the substrate across the membrane. This chain is Probable ABC transporter permease protein YesP (yesP), found in Bacillus subtilis (strain 168).